The primary structure comprises 281 residues: Arabinooligosaccharides transport system permease protein AraQ (281 aa).

6 consecutive transmembrane segments (helical) span residues 15 to 35 (LTLFFMMLSLLYLFPIFCLLL), 81 to 101 (LVLGLFTTVLTLFFSSMIGYG), 112 to 132 (IIFVLVLIIMMVPLEVMMLPL), 142 to 162 (IDSYTGVILPFIVSPVAVFFF), 185 to 205 (FGIFFRIMAPLMKPAFGAMII), and 247 to 267 (MLISGSVFAILPVIIIFLFFQ). The 190-residue stretch at 77–266 (FFNSLVLGLF…LPVIIIFLFF (190 aa)) folds into the ABC transmembrane type-1 domain.

It belongs to the binding-protein-dependent transport system permease family. MalFG subfamily. The complex is composed of two ATP-binding proteins (MsmX), two transmembrane proteins (AraP and AraQ) and a solute-binding protein (AraN).

Its subcellular location is the cell membrane. Functionally, part of the ABC transporter complex AraNPQ involved in the uptake of arabinooligosaccharides. Transports alpha-1,5-arabinooligosaccharides, at least up to four L-arabinosyl units. Responsible for the translocation of the substrate across the membrane. This Bacillus subtilis (strain 168) protein is Arabinooligosaccharides transport system permease protein AraQ.